A 169-amino-acid chain; its full sequence is Ribosome maturation factor RimM (169 aa).

Residues 91 to 167 enclose the PRC barrel domain; sequence EGEYYFADLI…RIVIATDFAH (77 aa).

This sequence belongs to the RimM family. As to quaternary structure, binds ribosomal protein uS19.

The protein localises to the cytoplasm. Its function is as follows. An accessory protein needed during the final step in the assembly of 30S ribosomal subunit, possibly for assembly of the head region. Essential for efficient processing of 16S rRNA. May be needed both before and after RbfA during the maturation of 16S rRNA. It has affinity for free ribosomal 30S subunits but not for 70S ribosomes. The chain is Ribosome maturation factor RimM from Erythrobacter litoralis (strain HTCC2594).